The primary structure comprises 65 residues: Small ribosomal subunit protein bS21 (65 aa).

The tract at residues 39–65 is disordered; the sequence is EKPSIKRKKKAIAARKRALKKQRKMMD. Positions 43–65 are enriched in basic residues; it reads IKRKKKAIAARKRALKKQRKMMD.

It belongs to the bacterial ribosomal protein bS21 family.

The polypeptide is Small ribosomal subunit protein bS21 (Pelobacter propionicus (strain DSM 2379 / NBRC 103807 / OttBd1)).